Consider the following 109-residue polypeptide: Probable glutaredoxin slr1562 (109 aa).

The 99-residue stretch at 11–109 folds into the Glutaredoxin domain; it reads LSGRQADGIK…PLLATPPNPA (99 aa). Cysteines 31 and 34 form a disulfide.

The protein belongs to the glutaredoxin family.

Its function is as follows. Has a glutathione-disulfide oxidoreductase activity in the presence of NADPH and glutathione reductase. Reduces low molecular weight disulfides and proteins. The protein is Probable glutaredoxin slr1562 of Synechocystis sp. (strain ATCC 27184 / PCC 6803 / Kazusa).